The chain runs to 193 residues: C-type lectin domain family 3 member A homolog (193 aa).

The signal sequence occupies residues 1-24 (MAQAGLLIWLFFTILLLDLTCTQS). 3 cysteine pairs are disulfide-bonded: Cys-66/Cys-76, Cys-93/Cys-188, and Cys-164/Cys-180. Residues 72 to 189 (IHKKCYLSFE…CRSLKKYICE (118 aa)) form the C-type lectin domain.

It localises to the secreted. The polypeptide is C-type lectin domain family 3 member A homolog (clec3a) (Xenopus laevis (African clawed frog)).